We begin with the raw amino-acid sequence, 493 residues long: UDP-N-acetylmuramoyl-L-alanyl-D-glutamate--2,6-diaminopimelate ligase (493 aa).

Ser-30 is a binding site for UDP-N-acetyl-alpha-D-muramoyl-L-alanyl-D-glutamate. 114–120 (GTNGKTS) lines the ATP pocket. Residues 156–157 (TT), Ser-183, Gln-189, and Arg-191 contribute to the UDP-N-acetyl-alpha-D-muramoyl-L-alanyl-D-glutamate site. An N6-carboxylysine modification is found at Lys-223. Meso-2,6-diaminopimelate is bound by residues Arg-386, 410-413 (DNPR), Gly-460, and Glu-464. The short motif at 410 to 413 (DNPR) is the Meso-diaminopimelate recognition motif element.

It belongs to the MurCDEF family. MurE subfamily. Mg(2+) serves as cofactor. Post-translationally, carboxylation is probably crucial for Mg(2+) binding and, consequently, for the gamma-phosphate positioning of ATP.

It localises to the cytoplasm. It carries out the reaction UDP-N-acetyl-alpha-D-muramoyl-L-alanyl-D-glutamate + meso-2,6-diaminopimelate + ATP = UDP-N-acetyl-alpha-D-muramoyl-L-alanyl-gamma-D-glutamyl-meso-2,6-diaminopimelate + ADP + phosphate + H(+). It participates in cell wall biogenesis; peptidoglycan biosynthesis. Functionally, catalyzes the addition of meso-diaminopimelic acid to the nucleotide precursor UDP-N-acetylmuramoyl-L-alanyl-D-glutamate (UMAG) in the biosynthesis of bacterial cell-wall peptidoglycan. This Chromobacterium violaceum (strain ATCC 12472 / DSM 30191 / JCM 1249 / CCUG 213 / NBRC 12614 / NCIMB 9131 / NCTC 9757 / MK) protein is UDP-N-acetylmuramoyl-L-alanyl-D-glutamate--2,6-diaminopimelate ligase.